The sequence spans 630 residues: Transferrin-binding protein B (630 aa).

The first 17 residues, 1-17 (MKSVPLITGGLSFLLSA), serve as a signal peptide directing secretion. The N-palmitoyl cysteine moiety is linked to residue Cys18. The S-diacylglycerol cysteine moiety is linked to residue Cys18. Disordered stretches follow at residues 26 to 53 (DVDD…KSNL), 280 to 301 (VTPT…LEGG), and 591 to 613 (NNPT…SPNA). A compositionally biased stretch (polar residues) spans 32–50 (NPSSSKPRYQDDTSSSRTK).

This sequence belongs to the TbpB family.

Its subcellular location is the cell outer membrane. The protein resides in the cell surface. In terms of biological role, haemophilus acquires iron by extracting it from serum transferrin (TF) in its human host. Acts as a transferrin receptor and is required for transferrin utilization. This chain is Transferrin-binding protein B, found in Haemophilus influenzae (strain 86-028NP).